Reading from the N-terminus, the 304-residue chain is Eukaryotic translation initiation factor 2 subunit alpha (304 aa).

The 72-residue stretch at 17–88 folds into the S1 motif domain; that stretch reads DDIVMVNVQQ…EKGYIDLSKR (72 aa). The residue at position 52 (Ser52) is a Phosphoserine; by GCN2. Residues 283–304 form a disordered region; it reads LESKELDNRSDSEDDEDESDDE. Basic and acidic residues predominate over residues 284-293; that stretch reads ESKELDNRSD. Phosphoserine is present on residues Ser292 and Ser294. Positions 294-304 are enriched in acidic residues; sequence SEDDEDESDDE.

It belongs to the eIF-2-alpha family. As to quaternary structure, eukaryotic translation initiation factor 2 eIF2 is a heterotrimeric complex composed of an alpha, a beta and a gamma subunit. The factors eIF-1, eIF-2, eIF-3, TIF5/eIF-5 and methionyl-tRNAi form a multifactor complex (MFC) that may bind to the 40S ribosome. Interacts with CDC123; the interaction is direct. Interacts with GCD1. Phosphorylated; phosphorylation on Ser-52 by the GCN2 protein kinase occurs in response to low amino acid, carbon, or purine availability. Phosphorylation inhibits the guanine nucleotide exchange factor activity of the eIF2B complex.

The protein localises to the cytoplasm. It localises to the cytosol. EIF-2 functions in the early steps of protein synthesis by forming a ternary complex with GTP and initiator tRNA. This complex binds to a 40S ribosomal subunit, followed by mRNA binding to form a 43S pre-initiation complex. Junction of the 60S ribosomal subunit to form the 80S initiation complex is preceded by hydrolysis of the GTP bound to eIF-2 and release of an eIF-2-GDP binary complex. In order for eIF-2 to recycle and catalyze another round of initiation, the GDP bound to eIF-2 must exchange with GTP by way of a reaction catalyzed by eIF2B. The protein is Eukaryotic translation initiation factor 2 subunit alpha of Saccharomyces cerevisiae (strain ATCC 204508 / S288c) (Baker's yeast).